The following is a 278-amino-acid chain: Large ribosomal subunit protein uL2 (278 aa).

Residues 218–278 are disordered; it reads RPHNRGVVMN…IMRSRHQRKK (61 aa).

The protein belongs to the universal ribosomal protein uL2 family. As to quaternary structure, part of the 50S ribosomal subunit. Forms a bridge to the 30S subunit in the 70S ribosome.

Its function is as follows. One of the primary rRNA binding proteins. Required for association of the 30S and 50S subunits to form the 70S ribosome, for tRNA binding and peptide bond formation. It has been suggested to have peptidyltransferase activity; this is somewhat controversial. Makes several contacts with the 16S rRNA in the 70S ribosome. The polypeptide is Large ribosomal subunit protein uL2 (Rhizobium etli (strain CIAT 652)).